The following is a 748-amino-acid chain: MSDYNTGGPPPGPPPPAGGGGGAAGAGGGPPPGPPGAGDRGGGGPGGGGPGGGGASGGPSQPPGGGGPGIRKDAFADAVQRARQIAAKIGGDAATTVNNNTPDFGFGGQKRQLEDGDQPDSKKLASQGDSIGSQLGPIHPPPRTSMTEEYRVPDGMVGLIIGRGGEQINKIQQDSGCKVQISPDSGGLPERSVSLTGAPESVQKAKMMLDDIVSRGRGGPPGQFHDNANGGQNGTVQEIMIPAGKAGLVIGKGGETIKQLQERAGVKMILIQDGSQNTNVDKPLRIIGDPYKVQQACEMVMDILRERDQGGFGDRNEYGSRVGGGIDVPVPRHSVGVVIGRSGEMIKKIQNDAGVRIQFKQDDGTGPEKIAHIMGPPDRCEHAARIINDLLQSLRSGPPGPPGAPGMPPGGRGRGRGQGNWGPPGGEMTFSIPTHKCGLVIGRGGENVKAINQQTGAFVEISRQLPPNGDPNFKLFVIRGSPQQIDHAKQLIEEKIEGPLCPVGPGPGGPGPAGPMGPFNPGPFNQGPPGAPPHAGGPPPHQYPPQGWGNTYPQWQPPAPHDPNKAAAAATDPNAAWAAYYSHYYQQPPGPVPGPAPAPAAPPAQGEPPQPPPTGQSDYTKAWEEYYKKIGQQPQQPGAPPQQDYTKAWEEYYKKQAQVATGGGPGAPPGSQPDYSAAWAEYYRQQAAYYGQTPGPGGPQPPPTQQGQQQASGNCHPPPPPFSFQPPATVHPALVGSAGNPFPCGVCP.

The disordered stretch occupies residues 1–78 (MSDYNTGGPP…GIRKDAFADA (78 aa)). At S2 the chain carries N-acetylserine. Over residues 8-17 (GPPPGPPPPA) the composition is skewed to pro residues. Gly residues-rich tracts occupy residues 18-28 (GGGGGAAGAGG) and 36-69 (GAGD…GGPG). An Omega-N-methylarginine modification is found at R40. K88 carries the post-translational modification N6-acetyllysine. The disordered stretch occupies residues 90–148 (GGDAATTVNNNTPDFGFGGQKRQLEDGDQPDSKKLASQGDSIGSQLGPIHPPPRTSMTE). T101 is subject to Phosphothreonine. Residues 111 to 123 (RQLEDGDQPDSKK) show a composition bias toward basic and acidic residues. A Glycyl lysine isopeptide (Lys-Gly) (interchain with G-Cter in SUMO1); alternate cross-link involves residue K122. Residue K122 forms a Glycyl lysine isopeptide (Lys-Gly) (interchain with G-Cter in SUMO2); alternate linkage. Residues S126, S130, S182, S185, S194, and S275 each carry the phosphoserine modification. 3 KH domains span residues 145–209 (SMTE…KMML), 234–300 (GTVQ…CEMV), and 323–387 (GGGI…ARII). Positions 394–422 (LRSGPPGPPGAPGMPPGGRGRGRGQGNWG) are disordered. The segment covering 398 to 408 (PPGPPGAPGMP) has biased composition (pro residues). The span at 409-422 (PGGRGRGRGQGNWG) shows a compositional bias: gly residues. Residues R412, R414, R416, and R443 each carry the omega-N-methylarginine modification. Residues 425 to 492 (GGEMTFSIPT…QQIDHAKQLI (68 aa)) enclose the KH 4 domain. At S481 the chain carries Phosphoserine. Residues 498-570 (GPLCPVGPGP…HDPNKAAAAA (73 aa)) are disordered. Composition is skewed to pro residues over residues 502-521 (PVGP…PFNP) and 529-543 (PGAP…PHQY). Copy 1 of the repeat occupies 572 to 583 (DPNAAWAAYYSH). The interval 572–685 (DPNAAWAAYY…SAAWAEYYRQ (114 aa)) is 4 X 12 AA imperfect repeats. Positions 588 to 614 (PPGPVPGPAPAPAAPPAQGEPPQPPPT) are enriched in pro residues. Disordered stretches follow at residues 588–650 (PPGP…KAWE), 659–678 (VATG…YSAA), and 689–735 (YYGQ…PALV). 3 repeat units span residues 618–629 (DYTKAWEEYYKK), 644–655 (DYTKAWEEYYKK), and 674–685 (DYSAAWAEYYRQ).

This sequence belongs to the KHSRP family. As to quaternary structure, part of a ternary complex containing FUBP2, PTBP1, PTBP2 and HNRPH1. Interacts with PARN. Interacts with PQBP1.

It is found in the nucleus. The protein localises to the cytoplasm. Binds to the dendritic targeting element and may play a role in mRNA trafficking. Part of a ternary complex that binds to the downstream control sequence (DCS) of the pre-mRNA. Mediates exon inclusion in transcripts that are subject to tissue-specific alternative splicing. May interact with single-stranded DNA from the far-upstream element (FUSE). May activate gene expression. Also involved in degradation of inherently unstable mRNAs that contain AU-rich elements (AREs) in their 3'-UTR, possibly by recruiting degradation machinery to ARE-containing mRNAs. In Mus musculus (Mouse), this protein is Far upstream element-binding protein 2 (Khsrp).